The following is a 505-amino-acid chain: ATP synthase subunit alpha (505 aa).

The tract at residues 118–138 (VDGLGPINTTNTRPIESPAPG) is disordered. 172-179 (GDRQTGKT) serves as a coordination point for ATP.

Belongs to the ATPase alpha/beta chains family. F-type ATPases have 2 components, CF(1) - the catalytic core - and CF(0) - the membrane proton channel. CF(1) has five subunits: alpha(3), beta(3), gamma(1), delta(1), epsilon(1). CF(0) has three main subunits: a(1), b(2) and c(9-12). The alpha and beta chains form an alternating ring which encloses part of the gamma chain. CF(1) is attached to CF(0) by a central stalk formed by the gamma and epsilon chains, while a peripheral stalk is formed by the delta and b chains.

It is found in the cell membrane. The catalysed reaction is ATP + H2O + 4 H(+)(in) = ADP + phosphate + 5 H(+)(out). Produces ATP from ADP in the presence of a proton gradient across the membrane. The alpha chain is a regulatory subunit. In Bacillus cereus (strain ATCC 14579 / DSM 31 / CCUG 7414 / JCM 2152 / NBRC 15305 / NCIMB 9373 / NCTC 2599 / NRRL B-3711), this protein is ATP synthase subunit alpha.